Reading from the N-terminus, the 577-residue chain is Isocitrate dehydrogenase kinase/phosphatase (577 aa).

ATP-binding positions include 318–324 and K339; that span reads APGVRGM. The active site involves D374.

This sequence belongs to the AceK family.

Its subcellular location is the cytoplasm. It carries out the reaction L-seryl-[isocitrate dehydrogenase] + ATP = O-phospho-L-seryl-[isocitrate dehydrogenase] + ADP + H(+). Functionally, bifunctional enzyme which can phosphorylate or dephosphorylate isocitrate dehydrogenase (IDH) on a specific serine residue. This is a regulatory mechanism which enables bacteria to bypass the Krebs cycle via the glyoxylate shunt in response to the source of carbon. When bacteria are grown on glucose, IDH is fully active and unphosphorylated, but when grown on acetate or ethanol, the activity of IDH declines drastically concomitant with its phosphorylation. This chain is Isocitrate dehydrogenase kinase/phosphatase, found in Pseudomonas aeruginosa (strain LESB58).